The chain runs to 687 residues: T-box transcription factor TBX2b (687 aa).

Residues 103 to 276 (LWDQFHKLGT…NNPFAKGFRD (174 aa)) constitute a DNA-binding region (T-box). Disordered stretches follow at residues 303–452 (DRDG…ESPS) and 611–687 (NLLT…DSPK). Composition is skewed to basic and acidic residues over residues 338-357 (GSRD…HQND), 375-400 (SRSE…RKTS), and 408-430 (NLEK…KDTE). Polar residues-rich tracts occupy residues 431–451 (NSGI…TESP), 611–630 (NLLT…SSKC), and 644–654 (GASQRNGSPKT). Residues 654–681 (TTMKESINELQNIQRLVSGLESQRETSS) adopt a coiled-coil conformation. The segment covering 675–687 (SQRETSSPRDSPK) has biased composition (basic and acidic residues).

In terms of assembly, binds DNA as a monomer. Expressed in the axial mesoderm, notably, in the notochordal precursor cells immediately before formation of the notochord and in the chordoneural hinge of the tail bud, after the notochord is formed. In addition, its expression is detected in the ventral forebrain, sensory neurons, fin buds and excretory system.

It is found in the nucleus. Its function is as follows. Transcription factor which acts as a transcriptional repressor. May also function as a transcriptional activator. Binds to the palindromic T site 5'-TTCACACCTAGGTGTGAA-3' DNA sequence, or a half-site, which are present in the regulatory region of several genes. Involved in the transcriptional regulation of genes required for mesoderm differentiation. Plays a role in the specification of late notochordal precursor cells and formation of the differentiated notochord. Required for cardiac atrioventricular canal formation. This chain is T-box transcription factor TBX2b (tbx2b), found in Danio rerio (Zebrafish).